The chain runs to 872 residues: Dynein regulatory complex subunit 7 (872 aa).

Disordered stretches follow at residues 1 to 40, 231 to 281, and 385 to 410; these read MEVL…REET, ESVK…QEEA, and EEED…KSFD. The stretch at 1-64 forms a coiled coil; the sequence is MEVLKEKVEE…SEIEVSVPEK (64 aa). 3 stretches are compositionally biased toward basic and acidic residues: residues 16-40, 231-240, and 248-281; these read REEA…REET, ESVKEEEKAP, and PPRD…QEEA. A coiled-coil region spans residues 254–292; the sequence is SRFEQEQEMKRQEAIKAEEENRRKQEEARLLEQENAKTD. Positions 385–398 are enriched in acidic residues; the sequence is EEEDEGMNDDDDVE. The span at 399–409 shows a compositional bias: basic and acidic residues; that stretch reads NLGKEDEDKSF. Coiled coils occupy residues 676 to 706 and 780 to 805; these read LKNE…EEEE and QRLI…KKQQ.

This sequence belongs to the DRC7 family. In terms of assembly, component of the nexin-dynein regulatory complex (N-DRC). Interacts with TCTE1/DRC5. Interacts with DRC3 and GAS8/DRC4.

It localises to the cell projection. Its subcellular location is the cilium. The protein localises to the flagellum. The protein resides in the cytoplasm. It is found in the cytoskeleton. It localises to the cilium axoneme. Its subcellular location is the flagellum axoneme. Its function is as follows. Component of the nexin-dynein regulatory complex (N-DRC) a key regulator of ciliary/flagellar motility which maintains the alignment and integrity of the distal axoneme and regulates microtubule sliding in motile axonemes. Involved in the regulation of flagellar motility. Essential for male fertility, sperm head morphogenesis and sperm flagellum formation. This chain is Dynein regulatory complex subunit 7 (DRC7), found in Bos taurus (Bovine).